We begin with the raw amino-acid sequence, 183 residues long: Protein Syd (183 aa).

This sequence belongs to the Syd family.

The protein localises to the cell inner membrane. Functionally, interacts with the SecY protein in vivo. May bind preferentially to an uncomplexed state of SecY, thus functioning either as a chelating agent for excess SecY in the cell or as a regulatory factor that negatively controls the translocase function. This Idiomarina loihiensis (strain ATCC BAA-735 / DSM 15497 / L2-TR) protein is Protein Syd.